A 204-amino-acid chain; its full sequence is Guanylate kinase (204 aa).

The region spanning 5-184 (GLLLVLSGPS…AVDHIKSIVE (180 aa)) is the Guanylate kinase-like domain. Residue 12 to 19 (GPSGVGKG) participates in ATP binding.

This sequence belongs to the guanylate kinase family.

Its subcellular location is the cytoplasm. It carries out the reaction GMP + ATP = GDP + ADP. Functionally, essential for recycling GMP and indirectly, cGMP. In Lactobacillus johnsonii (strain CNCM I-12250 / La1 / NCC 533), this protein is Guanylate kinase.